We begin with the raw amino-acid sequence, 46 residues long: Protein PsbN (46 aa).

A helical membrane pass occupies residues 7 to 27 (GLSIAITFAVILLALTGFSIY).

This sequence belongs to the PsbN family.

The protein localises to the cellular thylakoid membrane. May play a role in photosystem I and II biogenesis. The sequence is that of Protein PsbN from Synechococcus elongatus (strain ATCC 33912 / PCC 7942 / FACHB-805) (Anacystis nidulans R2).